A 246-amino-acid chain; its full sequence is Uridylate kinase (246 aa).

18–21 (KVSG) contributes to the ATP binding site. Residue Gly60 coordinates UMP. ATP contacts are provided by Gly61 and Arg65. UMP is bound by residues Asp80 and 141–148 (TGNPFFTT). Residues Thr168, Gln169, Tyr174, and Asp177 each contribute to the ATP site.

This sequence belongs to the UMP kinase family. Homohexamer.

The protein resides in the cytoplasm. The catalysed reaction is UMP + ATP = UDP + ADP. It participates in pyrimidine metabolism; CTP biosynthesis via de novo pathway; UDP from UMP (UMPK route): step 1/1. With respect to regulation, inhibited by UTP. In terms of biological role, catalyzes the reversible phosphorylation of UMP to UDP. This Granulibacter bethesdensis (strain ATCC BAA-1260 / CGDNIH1) protein is Uridylate kinase.